The primary structure comprises 165 residues: MSALSPIPLRRLDPGIPVPTRAHPGDAGVDLCTTEDVVLAPGERVLVGTGIAVALPVGTVGLIHPRSGLAAKTGLSVVNTPGTVDAGYRGEIKVCLINHDPRTPIELRRGDRIAQLLVQRVELVDFVEVEQLDETSRGAGGHGSSGGHASLTPGARSAARVAQEG.

Residues 66-68, N79, 83-85, and K93 each bind substrate; these read RSG and TVD. A disordered region spans residues 134–165; the sequence is ETSRGAGGHGSSGGHASLTPGARSAARVAQEG.

This sequence belongs to the dUTPase family. The cofactor is Mg(2+).

The enzyme catalyses dUTP + H2O = dUMP + diphosphate + H(+). It functions in the pathway pyrimidine metabolism; dUMP biosynthesis; dUMP from dCTP (dUTP route): step 2/2. Its function is as follows. This enzyme is involved in nucleotide metabolism: it produces dUMP, the immediate precursor of thymidine nucleotides and it decreases the intracellular concentration of dUTP so that uracil cannot be incorporated into DNA. This is Deoxyuridine 5'-triphosphate nucleotidohydrolase from Nocardia farcinica (strain IFM 10152).